The primary structure comprises 215 residues: Elongation factor Ts (215 aa).

Positions 80–83 are involved in Mg(2+) ion dislocation from EF-Tu; sequence TDFV.

Belongs to the EF-Ts family.

The protein localises to the cytoplasm. In terms of biological role, associates with the EF-Tu.GDP complex and induces the exchange of GDP to GTP. It remains bound to the aminoacyl-tRNA.EF-Tu.GTP complex up to the GTP hydrolysis stage on the ribosome. In Alkaliphilus metalliredigens (strain QYMF), this protein is Elongation factor Ts.